Reading from the N-terminus, the 106-residue chain is Putative membrane protein insertion efficiency factor (106 aa).

This sequence belongs to the UPF0161 family.

The protein localises to the cell inner membrane. In terms of biological role, could be involved in insertion of integral membrane proteins into the membrane. This chain is Putative membrane protein insertion efficiency factor, found in Acinetobacter baylyi (strain ATCC 33305 / BD413 / ADP1).